Reading from the N-terminus, the 465-residue chain is Asparagine--tRNA ligase (465 aa).

Belongs to the class-II aminoacyl-tRNA synthetase family. In terms of assembly, homodimer.

The protein resides in the cytoplasm. It catalyses the reaction tRNA(Asn) + L-asparagine + ATP = L-asparaginyl-tRNA(Asn) + AMP + diphosphate + H(+). This chain is Asparagine--tRNA ligase, found in Hahella chejuensis (strain KCTC 2396).